The primary structure comprises 107 residues: EPIDERMAL PATTERNING FACTOR-like protein 5 (107 aa).

Positions 1–22 (MGVVLPTLIVYAFLLFFSSSSA) are cleaved as a signal peptide. 3 cysteine pairs are disulfide-bonded: cysteine 64–cysteine 98, cysteine 68–cysteine 74, and cysteine 71–cysteine 100.

The protein belongs to the plant cysteine rich small secretory peptide family. Epidermal patterning factor subfamily. Interacts with ERECTA. In terms of tissue distribution, expressed asymetically in the hypocotyl, on the side proximal to the folded cotyledons at germination. Detected in developing flowers, the chalazal region of ovules and near the root apex, but not in inflorescence stems. Expressed in cotyledons, flowers, adult leaves and fruits.

It localises to the secreted. Functionally, controls stomatal patterning. Mediates differentiation of stomatal lineage cells to pavement cells and stomatal development inhibition. TMM (AC Q9SSD1) functions to dampen or block CLL1 signaling. Acts as a growth-regulatory ligand for ERECTA family receptors. Promotes fruit growth and fertility. The chain is EPIDERMAL PATTERNING FACTOR-like protein 5 from Arabidopsis thaliana (Mouse-ear cress).